Consider the following 100-residue polypeptide: Putative pterin-4-alpha-carbinolamine dehydratase (100 aa).

It belongs to the pterin-4-alpha-carbinolamine dehydratase family.

The catalysed reaction is (4aS,6R)-4a-hydroxy-L-erythro-5,6,7,8-tetrahydrobiopterin = (6R)-L-erythro-6,7-dihydrobiopterin + H2O. The polypeptide is Putative pterin-4-alpha-carbinolamine dehydratase (Rhodopseudomonas palustris (strain ATCC BAA-98 / CGA009)).